Reading from the N-terminus, the 468-residue chain is Cysteine--tRNA ligase (468 aa).

C33 is a Zn(2+) binding site. A 'HIGH' region motif is present at residues 35–45; sequence ATVQGLPHIGH. Residues C211, H236, and E240 each contribute to the Zn(2+) site. A 'KMSKS' region motif is present at residues 267–271; that stretch reads KMSKS. K270 is a binding site for ATP.

This sequence belongs to the class-I aminoacyl-tRNA synthetase family. As to quaternary structure, monomer. It depends on Zn(2+) as a cofactor.

It localises to the cytoplasm. The enzyme catalyses tRNA(Cys) + L-cysteine + ATP = L-cysteinyl-tRNA(Cys) + AMP + diphosphate. This Mycobacterium marinum (strain ATCC BAA-535 / M) protein is Cysteine--tRNA ligase.